The sequence spans 564 residues: MRQSLTLIPTLREVPADAEAKSHKLLLRAGFIRQNTSGVYSYMPLAYRVIQNIQKIVREEMEKINAVEMLMPALQQAETWQESGRWYTYGPELMRLKDRHGREFALGATHEEVITSLVRDEVKSYKRLPLTLYQIQSKFRDEKRPRFGLLRGREFIMKDAYSFHASEESLEETYQNMYGAYSSIFARCELNVRPVIADSGAMGGKDTHEFMALSEIGEDTIAYSDGSSYAANTEMAEVVMNSEPSDETPEALEKIDTPNVKSIEELASFLQIEPSACIKSMLFKADDRFVLVLVRGDHEVNDVKVKNLLNAEVVELASHEEVAEKLGTEPGFAGPIGAAGDIEIYADQAVKVMVNAVSGANEKDRHYRNVNIERDASVKAYADLRIIQEGDPSPDGKGTIRFAEGIEVGQVFKLGTRYSEAMNATYLDENGRAQPMLMGCYGIGVSRTLSAIAEQHHDEKGLIWPKSVAPYDLHILALNMKNEAQKELAEQLYGKFQAEGYEVLYDDRAERAGVKFADSDLIGLPIRITVGKRADEGIVEVKIRKTGESAEVSVDELSEFIKTK.

It belongs to the class-II aminoacyl-tRNA synthetase family. ProS type 1 subfamily. In terms of assembly, homodimer.

Its subcellular location is the cytoplasm. It carries out the reaction tRNA(Pro) + L-proline + ATP = L-prolyl-tRNA(Pro) + AMP + diphosphate. Functionally, catalyzes the attachment of proline to tRNA(Pro) in a two-step reaction: proline is first activated by ATP to form Pro-AMP and then transferred to the acceptor end of tRNA(Pro). As ProRS can inadvertently accommodate and process non-cognate amino acids such as alanine and cysteine, to avoid such errors it has two additional distinct editing activities against alanine. One activity is designated as 'pretransfer' editing and involves the tRNA(Pro)-independent hydrolysis of activated Ala-AMP. The other activity is designated 'posttransfer' editing and involves deacylation of mischarged Ala-tRNA(Pro). The misacylated Cys-tRNA(Pro) is not edited by ProRS. This is Proline--tRNA ligase from Bacillus velezensis (strain DSM 23117 / BGSC 10A6 / LMG 26770 / FZB42) (Bacillus amyloliquefaciens subsp. plantarum).